The primary structure comprises 22 residues: Zinc metalloproteinase oxiagin (22 aa).

Positions 14–22 (CYIEFYVVV) constitute a Peptidase M12B domain.

The protein belongs to the venom metalloproteinase (M12B) family. P-III subfamily. P-IIId sub-subfamily. Heterotrimer; disulfide-linked. The heterotrimer consists of 1 metalloproteinase chain and 2 lectin chains. The cofactor is Zn(2+). In terms of processing, N-glycosylated. Expressed by the venom gland.

It is found in the secreted. In terms of biological role, snake venom metalloproteinase that inhibits the classical complement pathway dose-dependently. It acts by binding to carbohydrates of IgG within the antibody-sensitized sheep erythrocytes (EA) complex, and thus prevents interaction of component C2 with immobilized C4b. Also induces cation-independent hemagglutination that can be prevented by D-galactose pretreatment. The protein is Zinc metalloproteinase oxiagin of Naja oxiana (Central Asian cobra).